A 197-amino-acid chain; its full sequence is Na(+)-translocating NADH-quinone reductase subunit E (197 aa).

6 helical membrane-spanning segments follow: residues 11-31 (SVFI…FLAV), 35-55 (VSTA…SVPV), 76-96 (FLKF…LEMF), 108-128 (LGIY…VSFM), 139-159 (VVYG…LAGI), and 175-195 (LGIT…FSGI).

The protein belongs to the NqrDE/RnfAE family. In terms of assembly, composed of six subunits; NqrA, NqrB, NqrC, NqrD, NqrE and NqrF.

The protein resides in the cell inner membrane. It carries out the reaction a ubiquinone + n Na(+)(in) + NADH + H(+) = a ubiquinol + n Na(+)(out) + NAD(+). NQR complex catalyzes the reduction of ubiquinone-1 to ubiquinol by two successive reactions, coupled with the transport of Na(+) ions from the cytoplasm to the periplasm. NqrA to NqrE are probably involved in the second step, the conversion of ubisemiquinone to ubiquinol. The protein is Na(+)-translocating NADH-quinone reductase subunit E of Neisseria meningitidis serogroup C (strain 053442).